We begin with the raw amino-acid sequence, 47 residues long: Small, acid-soluble spore protein N (47 aa).

Residues 1 to 47 are disordered; sequence MSNPRGNPKYFNPNHLGTQPRAAGGNKGKKMQDQSGQHAQVIQTKGE. Polar residues predominate over residues 33–47; sequence DQSGQHAQVIQTKGE.

It belongs to the SspN family.

It localises to the spore core. This is Small, acid-soluble spore protein N from Geobacillus sp. (strain WCH70).